The primary structure comprises 281 residues: Probable endonuclease 4 (281 aa).

The Zn(2+) site is built by histidine 69, histidine 109, glutamate 145, aspartate 179, histidine 182, histidine 216, aspartate 229, histidine 231, and glutamate 261.

Belongs to the AP endonuclease 2 family. It depends on Zn(2+) as a cofactor.

It carries out the reaction Endonucleolytic cleavage to 5'-phosphooligonucleotide end-products.. Functionally, endonuclease IV plays a role in DNA repair. It cleaves phosphodiester bonds at apurinic or apyrimidinic (AP) sites, generating a 3'-hydroxyl group and a 5'-terminal sugar phosphate. This chain is Probable endonuclease 4, found in Parabacteroides distasonis (strain ATCC 8503 / DSM 20701 / CIP 104284 / JCM 5825 / NCTC 11152).